We begin with the raw amino-acid sequence, 452 residues long: Exodeoxyribonuclease 7 large subunit (452 aa).

The protein belongs to the XseA family. In terms of assembly, heterooligomer composed of large and small subunits.

It is found in the cytoplasm. It carries out the reaction Exonucleolytic cleavage in either 5'- to 3'- or 3'- to 5'-direction to yield nucleoside 5'-phosphates.. In terms of biological role, bidirectionally degrades single-stranded DNA into large acid-insoluble oligonucleotides, which are then degraded further into small acid-soluble oligonucleotides. The chain is Exodeoxyribonuclease 7 large subunit from Bacillus thuringiensis (strain Al Hakam).